A 223-amino-acid chain; its full sequence is ATP-dependent dethiobiotin synthetase BioD (223 aa).

11–16 (DIGKTY) is an ATP binding site. Position 15 (Thr-15) interacts with Mg(2+). Residue Lys-36 is part of the active site. Residue Thr-40 participates in substrate binding. ATP contacts are provided by residues Asp-50, 110–113 (EGAG), and 174–175 (NN). The Mg(2+) site is built by Asp-50 and Glu-110.

This sequence belongs to the dethiobiotin synthetase family. Homodimer. Requires Mg(2+) as cofactor.

It localises to the cytoplasm. The enzyme catalyses (7R,8S)-7,8-diammoniononanoate + CO2 + ATP = (4R,5S)-dethiobiotin + ADP + phosphate + 3 H(+). The protein operates within cofactor biosynthesis; biotin biosynthesis; biotin from 7,8-diaminononanoate: step 1/2. Its function is as follows. Catalyzes a mechanistically unusual reaction, the ATP-dependent insertion of CO2 between the N7 and N8 nitrogen atoms of 7,8-diaminopelargonic acid (DAPA, also called 7,8-diammoniononanoate) to form a ureido ring. The polypeptide is ATP-dependent dethiobiotin synthetase BioD (Staphylococcus epidermidis (strain ATCC 35984 / DSM 28319 / BCRC 17069 / CCUG 31568 / BM 3577 / RP62A)).